Here is a 190-residue protein sequence, read N- to C-terminus: Large ribosomal subunit protein uL10 (190 aa).

A disordered region spans residues 170-190 (AAGAPAEAAPVEAPAAETVDA).

Belongs to the universal ribosomal protein uL10 family. As to quaternary structure, part of the ribosomal stalk of the 50S ribosomal subunit. The N-terminus interacts with L11 and the large rRNA to form the base of the stalk. The C-terminus forms an elongated spine to which L12 dimers bind in a sequential fashion forming a multimeric L10(L12)X complex.

Its function is as follows. Forms part of the ribosomal stalk, playing a central role in the interaction of the ribosome with GTP-bound translation factors. The sequence is that of Large ribosomal subunit protein uL10 from Kineococcus radiotolerans (strain ATCC BAA-149 / DSM 14245 / SRS30216).